The sequence spans 197 residues: Syndecan-4 (197 aa).

Positions 1–19 (MPLPRAAFLLGLLLAAAAA) are cleaved as a signal peptide. The Extracellular portion of the chain corresponds to 20 to 147 (ESVRETETMD…SIFERTEVLT (128 aa)). O-linked (Xyl...) (glycosaminoglycan) serine glycans are attached at residues S38, S65, and S67. N124 and N136 each carry an N-linked (GlcNAc...) asparagine glycan. A helical membrane pass occupies residues 148 to 168 (ALIAGGAVGLLFAVFLILLLV). The Cytoplasmic portion of the chain corresponds to 169 to 197 (YRMKKKDEGSYDLGKKPIYKKAPTNEFYA).

The protein belongs to the syndecan proteoglycan family. Interacts with SDOS. In terms of processing, O-glycosylated; contains both chondroitin sulfate and heparan sulfate. Ser-38, Ser-65 and Ser-67 can all be modified by either chondroitin sulfate or heparan sulfate, and the protein exists in forms that contain only chondroitin sulfate, only heparan sulfate and both chondroitin sulfate and heparan sulfate.

It is found in the membrane. Its function is as follows. Cell surface proteoglycan which regulates exosome biogenesis in concert with SDCBP and PDCD6IP. The chain is Syndecan-4 (SDC4) from Gallus gallus (Chicken).